A 605-amino-acid polypeptide reads, in one-letter code: Aspartate--tRNA(Asp/Asn) ligase (605 aa).

Glu178 is an L-aspartate binding site. Positions 202-205 are aspartate; that stretch reads QLFK. Residue Arg224 coordinates L-aspartate. ATP is bound by residues 224-226 and Gln233; that span reads RDE. His458 is a binding site for L-aspartate. Glu488 contacts ATP. An L-aspartate-binding site is contributed by Arg495. An ATP-binding site is contributed by 540 to 543; sequence GLDR. A disordered region spans residues 580–605; it reads QQLKELHVTPAKPAKTTAKTKPRPAD.

The protein belongs to the class-II aminoacyl-tRNA synthetase family. Type 1 subfamily. Homodimer.

The protein localises to the cytoplasm. It carries out the reaction tRNA(Asx) + L-aspartate + ATP = L-aspartyl-tRNA(Asx) + AMP + diphosphate. In terms of biological role, aspartyl-tRNA synthetase with relaxed tRNA specificity since it is able to aspartylate not only its cognate tRNA(Asp) but also tRNA(Asn). Reaction proceeds in two steps: L-aspartate is first activated by ATP to form Asp-AMP and then transferred to the acceptor end of tRNA(Asp/Asn). This Thermosynechococcus vestitus (strain NIES-2133 / IAM M-273 / BP-1) protein is Aspartate--tRNA(Asp/Asn) ligase.